The sequence spans 753 residues: Photosystem I P700 chlorophyll a apoprotein A1 (753 aa).

A run of 8 helical transmembrane segments spans residues 72–95 (IFSAHFGHLAIIFVWLSGAYFHGA), 158–181 (LYCTAIGGLVMAALMMFAGWFHYH), 197–221 (MNHHLAGLLGLGCLSWAGHQIHVSL), 293–311 (TAHHHLALAVLFIVAGHMY), 350–373 (WHAQLAINLAMLGSLSIIVAHHMY), 389–415 (LSLFTHHMWIGGFLIVGAGAHGAIFMV), 437–459 (AIISHLNWVCIFLGFHSFGLYVH), and 534–552 (FMVHHIHAFTIHVTALILL). [4Fe-4S] cluster contacts are provided by Cys-576 and Cys-585. Helical transmembrane passes span 592 to 613 (HVFLGLFWMYNSLSIVIFHFSW) and 667 to 689 (LSAYGLLFLGAHFIWAFSLMFLF). His-678 serves as a coordination point for chlorophyll a'. The chlorophyll a site is built by Met-686 and Tyr-694. Trp-695 is a phylloquinone binding site. A helical membrane pass occupies residues 727–747 (AVGVAHYLLGGIVTTWAFFLA).

This sequence belongs to the PsaA/PsaB family. As to quaternary structure, the PsaA/B heterodimer binds the P700 chlorophyll special pair and subsequent electron acceptors. PSI consists of a core antenna complex that captures photons, and an electron transfer chain that converts photonic excitation into a charge separation. The cyanobacterial PSI reaction center is composed of one copy each of PsaA,B,C,D,E,F,I,J,K,L,M and X, and forms trimeric complexes. It depends on PSI electron transfer chain: 5 chlorophyll a, 1 chlorophyll a', 2 phylloquinones and 3 4Fe-4S clusters. PSI core antenna: 90 chlorophyll a, 22 carotenoids, 3 phospholipids and 1 galactolipid. P700 is a chlorophyll a/chlorophyll a' dimer, A0 is one or more chlorophyll a, A1 is one or both phylloquinones and FX is a shared 4Fe-4S iron-sulfur center. as a cofactor.

The protein resides in the cellular thylakoid membrane. It catalyses the reaction reduced [plastocyanin] + hnu + oxidized [2Fe-2S]-[ferredoxin] = oxidized [plastocyanin] + reduced [2Fe-2S]-[ferredoxin]. Its function is as follows. PsaA and PsaB bind P700, the primary electron donor of photosystem I (PSI), as well as the electron acceptors A0, A1 and FX. PSI is a plastocyanin/cytochrome c6-ferredoxin oxidoreductase, converting photonic excitation into a charge separation, which transfers an electron from the donor P700 chlorophyll pair to the spectroscopically characterized acceptors A0, A1, FX, FA and FB in turn. Oxidized P700 is reduced on the lumenal side of the thylakoid membrane by plastocyanin or cytochrome c6. The protein is Photosystem I P700 chlorophyll a apoprotein A1 of Trichodesmium erythraeum (strain IMS101).